We begin with the raw amino-acid sequence, 205 residues long: Holliday junction resolvase RecU (205 aa).

The disordered stretch occupies residues 1-26 (MIRYPNGKSYQPIQPIGTKKRISGES). Mg(2+)-binding residues include Thr86, Asp88, Glu101, and Gln120.

This sequence belongs to the RecU family. Mg(2+) is required as a cofactor.

The protein localises to the cytoplasm. It catalyses the reaction Endonucleolytic cleavage at a junction such as a reciprocal single-stranded crossover between two homologous DNA duplexes (Holliday junction).. Endonuclease that resolves Holliday junction intermediates in genetic recombination. Cleaves mobile four-strand junctions by introducing symmetrical nicks in paired strands. Promotes annealing of linear ssDNA with homologous dsDNA. Required for DNA repair, homologous recombination and chromosome segregation. This is Holliday junction resolvase RecU from Bacillus pumilus (strain SAFR-032).